A 472-amino-acid chain; its full sequence is uncharacterized protein (472 aa).

To B.subtilis YcdC.

This is an uncharacterized protein from Bacillus subtilis (strain 168).